We begin with the raw amino-acid sequence, 736 residues long: Transcription factor E2F8 (736 aa).

The interval Met1–Thr26 is disordered. Over residues Pro15–Thr26 the composition is skewed to polar residues. DNA-binding regions lie at residues Arg98–Gly167 and Arg240–Cys326. Disordered stretches follow at residues Arg386–Ser405, Ser435–Thr456, Glu483–Asp551, and Pro716–Asp736. Residues Pro393 to Ser405 are compositionally biased toward low complexity. Basic and acidic residues-rich tracts occupy residues Gly509–Cys539 and Ser726–Asp736.

This sequence belongs to the E2F/DP family. As to quaternary structure, homodimer and heterodimer: mainly forms homodimers and, to a lesser extent, heterodimers with e2f7.

Its subcellular location is the nucleus. In terms of biological role, atypical E2F transcription factor that participates in various processes such as angiogenesis and polyploidization of specialized cells. Mainly acts as a transcription repressor that binds DNA independently of DP proteins and specifically recognizes the E2 recognition site 5'-TTTC[CG]CGC-3'. Directly represses transcription of classical E2F transcription factors such as e2f1. Acts as a regulator of S-phase by recognizing and binding the E2-related site 5'-TTCCCGCC-3' and mediating repression of G1/S-regulated genes. Acts as a promoter of sprouting angiogenesis, possibly by acting as a transcription activator. This is Transcription factor E2F8 (e2f8) from Xenopus tropicalis (Western clawed frog).